The sequence spans 278 residues: Undecaprenyl-diphosphatase 1 (278 aa).

7 helical membrane-spanning segments follow: residues 1 to 21, 43 to 63, 83 to 103, 112 to 132, 192 to 212, 224 to 244, and 257 to 277; these read MFFG…TEFL, AFTT…VVLL, IWAT…IGFL, LMNW…FIFI, FSFF…IGSY, IVIL…VIKW, and FGWY…IGII.

The protein belongs to the UppP family.

It is found in the cell membrane. It carries out the reaction di-trans,octa-cis-undecaprenyl diphosphate + H2O = di-trans,octa-cis-undecaprenyl phosphate + phosphate + H(+). Catalyzes the dephosphorylation of undecaprenyl diphosphate (UPP). Confers resistance to bacitracin. The protein is Undecaprenyl-diphosphatase 1 of Oenococcus oeni (strain ATCC BAA-331 / PSU-1).